Consider the following 93-residue polypeptide: YcgL domain-containing protein Spea_2443 (93 aa).

A YcgL domain is found at 1-85 (MICAVYKSLR…PVVNLLEQHK (85 aa)).

The sequence is that of YcgL domain-containing protein Spea_2443 from Shewanella pealeana (strain ATCC 700345 / ANG-SQ1).